A 246-amino-acid chain; its full sequence is FAD synthetase (246 aa).

Belongs to the RibF family.

The enzyme catalyses FMN + ATP + H(+) = FAD + diphosphate. It functions in the pathway cofactor biosynthesis; FAD biosynthesis; FAD from FMN: step 1/1. Functionally, catalyzes the adenylation of flavin mononucleotide (FMN) to form flavin adenine dinucleotide (FAD) coenzyme. Can also catalyze, with lower efficiency, the adenylation of the toxic riboflavin analogs 8-demethyl-8-aminoriboflavin mononucleotide (AFMN) and roseoflavin mononucleotide (RoFMN) to 8-demethyl-8-aminoriboflavin adenine dinucleotide (AFAD) and roseoflavin adenine dinucleotide (RoFAD), respectively. The polypeptide is FAD synthetase (Listeria monocytogenes serovar 1/2a (strain ATCC BAA-679 / EGD-e)).